Reading from the N-terminus, the 475-residue chain is Glutamyl-tRNA(Gln) amidotransferase subunit A (475 aa).

Active-site charge relay system residues include Lys-69 and Ser-144. Residue Ser-168 is the Acyl-ester intermediate of the active site.

Belongs to the amidase family. GatA subfamily. As to quaternary structure, heterotrimer of A, B and C subunits.

The enzyme catalyses L-glutamyl-tRNA(Gln) + L-glutamine + ATP + H2O = L-glutaminyl-tRNA(Gln) + L-glutamate + ADP + phosphate + H(+). Functionally, allows the formation of correctly charged Gln-tRNA(Gln) through the transamidation of misacylated Glu-tRNA(Gln) in organisms which lack glutaminyl-tRNA synthetase. The reaction takes place in the presence of glutamine and ATP through an activated gamma-phospho-Glu-tRNA(Gln). This is Glutamyl-tRNA(Gln) amidotransferase subunit A from Methanosarcina barkeri (strain Fusaro / DSM 804).